The chain runs to 326 residues: tRNA-modifying protein YgfZ (326 aa).

Residues W27 and W189 each contribute to the folate site.

Belongs to the tRNA-modifying YgfZ family.

Its subcellular location is the cytoplasm. Its function is as follows. Folate-binding protein involved in regulating the level of ATP-DnaA and in the modification of some tRNAs. It is probably a key factor in regulatory networks that act via tRNA modification, such as initiation of chromosomal replication. In Escherichia coli (strain SMS-3-5 / SECEC), this protein is tRNA-modifying protein YgfZ.